The primary structure comprises 323 residues: D-alanine--D-alanine ligase (323 aa).

One can recognise an ATP-grasp domain in the interval 102-300 (KQIFRAEGIP…FTELVERMLQ (199 aa)). 130–185 (VARLGSPLVVKPSNSGSTVGISLARDEVSLAQGLALASSVSSRVFLERYIPGKEIT) serves as a coordination point for ATP. Residues D254, E267, and N269 each coordinate Mg(2+).

This sequence belongs to the D-alanine--D-alanine ligase family. Mg(2+) is required as a cofactor. The cofactor is Mn(2+).

Its subcellular location is the cytoplasm. It catalyses the reaction 2 D-alanine + ATP = D-alanyl-D-alanine + ADP + phosphate + H(+). The protein operates within cell wall biogenesis; peptidoglycan biosynthesis. In terms of biological role, cell wall formation. The sequence is that of D-alanine--D-alanine ligase from Synechococcus sp. (strain JA-3-3Ab) (Cyanobacteria bacterium Yellowstone A-Prime).